A 913-amino-acid polypeptide reads, in one-letter code: Tyrosine-protein phosphatase non-receptor type 3 (913 aa).

An FERM domain is found at 29-312 (VICSIRFLDG…EHHSFFQAKK (284 aa)). Phosphoserine occurs at positions 357, 359, and 367. Disordered regions lie at residues 364–400 (ETKS…DNLA) and 417–473 (KGPL…PDGV). The residue at position 376 (threonine 376) is a Phosphothreonine. Serine 381 bears the Phosphoserine mark. Residues 382 to 393 (PRLRHEIRKPRH) show a composition bias toward basic residues. Serine 425 carries the phosphoserine modification. The span at 441–453 (SENNPAQSCLTQK) shows a compositional bias: polar residues. Residues 454–470 (SSSSVSPSSNAPGSCSP) are compositionally biased toward low complexity. Residues 510–582 (LIRITPDEEG…DQVVMFIKAS (73 aa)) enclose the PDZ domain. The Tyrosine-protein phosphatase domain occupies 646–901 (VLIQFEQLYR…KFVCEAILRV (256 aa)). Residues aspartate 811, 842–848 (CSAGIGR), and glutamine 886 contribute to the substrate site. The Phosphocysteine intermediate role is filled by cysteine 842.

It belongs to the protein-tyrosine phosphatase family. Non-receptor class subfamily.

It localises to the cell membrane. Its subcellular location is the cytoplasm. It is found in the cytoskeleton. The enzyme catalyses O-phospho-L-tyrosyl-[protein] + H2O = L-tyrosyl-[protein] + phosphate. Functionally, may act at junctions between the membrane and the cytoskeleton. In Mus musculus (Mouse), this protein is Tyrosine-protein phosphatase non-receptor type 3 (Ptpn3).